Consider the following 1404-residue polypeptide: DNA-directed RNA polymerase subunit beta' (1404 aa).

The Zn(2+) site is built by Cys-60, Cys-62, Cys-75, and Cys-78. The Mg(2+) site is built by Asp-449, Asp-451, and Asp-453. Residues Cys-778, Cys-852, Cys-859, and Cys-862 each contribute to the Zn(2+) site. The disordered stretch occupies residues 1380 to 1404 (LDRPLEEEEEEEIPQAIAEESDAEE). Positions 1384-1404 (LEEEEEEEIPQAIAEESDAEE) are enriched in acidic residues.

This sequence belongs to the RNA polymerase beta' chain family. As to quaternary structure, the RNAP catalytic core consists of 2 alpha, 1 beta, 1 beta' and 1 omega subunit. When a sigma factor is associated with the core the holoenzyme is formed, which can initiate transcription. Requires Mg(2+) as cofactor. It depends on Zn(2+) as a cofactor.

The enzyme catalyses RNA(n) + a ribonucleoside 5'-triphosphate = RNA(n+1) + diphosphate. Its function is as follows. DNA-dependent RNA polymerase catalyzes the transcription of DNA into RNA using the four ribonucleoside triphosphates as substrates. The polypeptide is DNA-directed RNA polymerase subunit beta' (Leptospira interrogans serogroup Icterohaemorrhagiae serovar Lai (strain 56601)).